A 673-amino-acid chain; its full sequence is UvrABC system protein B (673 aa).

Residues 26–414 (EGLEDGLAHQ…GDEVVDQVVR (389 aa)) form the Helicase ATP-binding domain. 39–46 (GVTGSGKT) serves as a coordination point for ATP. Residues 92–115 (YYDYYQPEAYVPSSDTFIEKDASI) carry the Beta-hairpin motif. In terms of domain architecture, Helicase C-terminal spans 431–597 (QVDDLLSEIR…GLNKKVVDIL (167 aa)). Residues 633 to 668 (QQKIHELEGQMMQHAQNLEFEEAAQIRDQLHQLREL) form the UVR domain.

This sequence belongs to the UvrB family. Forms a heterotetramer with UvrA during the search for lesions. Interacts with UvrC in an incision complex.

Its subcellular location is the cytoplasm. The UvrABC repair system catalyzes the recognition and processing of DNA lesions. A damage recognition complex composed of 2 UvrA and 2 UvrB subunits scans DNA for abnormalities. Upon binding of the UvrA(2)B(2) complex to a putative damaged site, the DNA wraps around one UvrB monomer. DNA wrap is dependent on ATP binding by UvrB and probably causes local melting of the DNA helix, facilitating insertion of UvrB beta-hairpin between the DNA strands. Then UvrB probes one DNA strand for the presence of a lesion. If a lesion is found the UvrA subunits dissociate and the UvrB-DNA preincision complex is formed. This complex is subsequently bound by UvrC and the second UvrB is released. If no lesion is found, the DNA wraps around the other UvrB subunit that will check the other stand for damage. This chain is UvrABC system protein B, found in Salmonella paratyphi A (strain ATCC 9150 / SARB42).